A 331-amino-acid chain; its full sequence is Coiled-coil domain-containing protein 92 (331 aa).

Coiled coils occupy residues 18–44 and 76–152; these read MAATNLENQLHSAQKNLLFLQREHAST and DGTS…EQRA. Positions 171-184 are enriched in low complexity; the sequence is SSSGTSDASPSGSP. Residues 171–212 are disordered; sequence SSSGTSDASPSGSPVLASYKPAPPKDKLPETPRRRMKKSLSA. Basic and acidic residues predominate over residues 193–203; that stretch reads PPKDKLPETPR. Phosphoserine is present on Ser-209.

Interacts with CEP164. As to quaternary structure, (Microbial infection) Interacts with ebolavirus protein NP; this interaction sequesters NP in the cytoplasm. Post-translationally, phosphorylated at Ser-209 by TTBK2.

It localises to the cytoplasm. The protein localises to the cytoskeleton. Its subcellular location is the microtubule organizing center. The protein resides in the centrosome. It is found in the centriole. Functionally, interferon-stimulated protein that plays a role in innate immunity. Strongly inhibits ebolavirus transcription and replication. Forms a complex with viral RNA-bound nucleocapsid NP and thereby prevents the transport of NP to the cell surface. This chain is Coiled-coil domain-containing protein 92 (CCDC92), found in Homo sapiens (Human).